Consider the following 306-residue polypeptide: HTH-type transcriptional regulator AlkR (306 aa).

An HTH araC/xylS-type domain is found at 207–305; it reads SNALAAIHAY…EQSPKHYRQQ (99 aa). 2 DNA-binding regions (H-T-H motif) span residues 224 to 245 and 272 to 295; these read ESLADQCCMSRSKFATLFQSIV and IQQIANKVGYSSETAFSQAFKRQF.

It participates in hydrocarbon metabolism; alkane degradation. This protein activates the expression of the alkane 1-monooxygenase AlkM. This chain is HTH-type transcriptional regulator AlkR (alkR), found in Acinetobacter baylyi (strain ATCC 33305 / BD413 / ADP1).